We begin with the raw amino-acid sequence, 410 residues long: MANHVAIIGNGVAGFTTAQALRAEGYEGRISLIGEEQHLPYDRPSLSKAVLDGSFEQPPRLAEADWYSEASIEMLTGSEVTDLDTQKKMISLNDGSTISADAIVIATGSRARMLSLPGSQLPGVVTLRTYGDVQLLRDSWTPNTRLLIVGGGLIGCEVATTARKLGLSVTILEAGDELLVRVLGRRIGAWLRGLLTEQGVQVELKTGVSGFSGEGQLEKVMVNDGRSFIADNALICVGADPADQLARQAGLECDRGVVVDHRGATSAKGIFAVGDVATWPLHSGGKRSLETYMNAQRQATAVAKAILGKEVSAPQLPVSWTEIAGHRMQMAGDIEGPGEYVLRGTLGIGSALLFRLLDGRIQAVVAVDAPRDFALANRLVEAQVIIEPEKLADVSNNMRDIVRANEGNQK.

Residue 4 to 35 (HVAIIGNGVAGFTTAQALRAEGYEGRISLIGE) coordinates FAD. Position 145–173 (145–173 (RLLIVGGGLIGCEVATTARKLGLSVTILE)) interacts with NAD(+).

Belongs to the bacterial ring-hydroxylating dioxygenase ferredoxin reductase family. As to quaternary structure, this dioxygenase system consists of four proteins: the two subunits of the hydroxylase component (BedC1 and BedC2), a ferredoxin (BedB) and a ferredoxin reductase (BedA). The cofactor is FAD.

The enzyme catalyses 2 reduced [2Fe-2S]-[ferredoxin] + NAD(+) + H(+) = 2 oxidized [2Fe-2S]-[ferredoxin] + NADH. Its pathway is aromatic compound metabolism; benzene degradation; catechol from benzene: step 1/2. Functionally, part of the electron transfer component of benzene 1,2-dioxygenase, transfers electrons from ferredoxin to NADH. This is Benzene 1,2-dioxygenase system ferredoxin--NAD(+) reductase subunit (bedA) from Pseudomonas putida (Arthrobacter siderocapsulatus).